We begin with the raw amino-acid sequence, 311 residues long: Ferrochelatase (311 aa).

The Fe cation site is built by histidine 179 and glutamate 260.

It belongs to the ferrochelatase family.

The protein localises to the cytoplasm. It carries out the reaction heme b + 2 H(+) = protoporphyrin IX + Fe(2+). It participates in porphyrin-containing compound metabolism; protoheme biosynthesis; protoheme from protoporphyrin-IX: step 1/1. Catalyzes the ferrous insertion into protoporphyrin IX. The chain is Ferrochelatase from Helicobacter hepaticus (strain ATCC 51449 / 3B1).